The following is a 1174-amino-acid chain: MSSVLSDYTIGGVKIHFPCRAYPAQLAMMNSIVRGLNSSQHCLLESPTGSGKSLALLCSALAWQQSLSEKPVDEGLNKKPEAPPSCSCACHSKNFTYSDTNLDTSPHFNSPSKPSSGRNGVSTPCQDSPEKNTLAAKLSAKKQASIHRDEDDDFQVEKKRIRPLETTQQIRKRHCLEKDVHHVDARLASEKRVKPESPIGKSFSDRKDSFQNVDGLCSRCCCSAKQGNNQEPANTVKKDHGGQCKRPKIYFGTRTHKQIAQITRELRKTAYSGVPMTILSSRDHSCVHPEVVGNFNRKEKCMELLDGKHGKSCYFYHGVHKISNQQTLQHLQGMSRAWDIEELVSLGRKLKACPYYTARELIEDADIVFCPYNYLLDSQIRETMDIKLKGQVVILDEAHNIEDCARESASYSVTEVQLRFARDELDSLINGNIRKKSHEPLRDVCYNLINWLETNSKHLVERGYESSCKIWSGNEMLLNLYRMGITTATFPVLQRHLSAVLQKEEKVTPIHGKEEAIQIPIISASTQVVLKGLFMVLDYLFRENSRFADDYKVAIQQTYSWTNQIAIFDKTGVLAVPKNKKHSRQKIGVNALNFWCLNPAVAFSDINDKVRTIVLTSGTLSPLKSFSSELGVTFSIQLEANHVISNSQVWVGTVGSGPKGRNLCATFQHTETFEFQDEVGMLLLSVCQTVSQGILCFLPSYKLLEKLRERWIFTGLWHSLESVKTVIAEPQGGEKTDFDELLQVYYDAIKFKGEKDGALLIAVCRGKVSEGLDFSDDNARAVITVGIPFPNVKDLQVELKRQYNDHHSKSRGLLPGRQWYEIQAYRALNQALGRCIRHKNDWGALILVDDRFNNNPNRYISGLSKWVRQQIQHHSSFASALESLTEFSRRHQKVTNRSKKDEKCTKDNEPTLEVACLEDSTFTSVSESSHQSPENSTEEAEVCVQELQCPQVATKSPSVASHGVSRRKKSDPGLRGESLQTMKTEKNEISRSSSPTFGKQTEPVNWPIFNSLRRHFNSKVKNCTPVLKSSKNRAPGSSTFNKTALPLTGNCVPSNETADTSLGPCLQSEVIISPVKIEATPATNYSKQVFCCEKDLLPDTELSPGTEEAKCPSSNKAAETEVDDDSECFTPELFDPVDTNEENGELVETDRSSHSSDCFSAEELFETATGFGQK.

One can recognise a Helicase ATP-binding domain in the interval 11–445 (GGVKIHFPCR…KSHEPLRDVC (435 aa)). The segment covering 101-126 (NLDTSPHFNSPSKPSSGRNGVSTPCQ) has biased composition (polar residues). Disordered regions lie at residues 101-160 (NLDT…EKKR) and 187-208 (LASEKRVKPESPIGKSFSDRKD). A compositionally biased stretch (low complexity) spans 134-143 (LAAKLSAKKQ). The Nuclear localization signal motif lies at 158–175 (KKRIRPLETTQQIRKRHC). 185–192 (ARLASEKR) is an ATP binding site. [4Fe-4S] cluster contacts are provided by Cys-286, Cys-301, Cys-313, and Cys-353. The DEAH box signature appears at 393–396 (VILD). The interval 888–1063 (SRRHQKVTNR…SNETADTSLG (176 aa)) is interaction with BRCA1. Composition is skewed to polar residues over residues 923-935 (TSVSESSHQSPEN) and 990-1001 (SRSSSPTFGKQT). 2 disordered regions span residues 923–1001 (TSVS…GKQT) and 1102–1155 (LSPG…SSHS). Ser-929, Ser-932, and Ser-994 each carry phosphoserine. Positions 1138 to 1147 (DTNEENGELV) are enriched in acidic residues. N6-acetyllysine is present on Lys-1174.

This sequence belongs to the DEAD box helicase family. DEAH subfamily. In terms of assembly, binds directly to the BRCT domains of BRCA1. Interacts with the CIA complex components CIAO1, CIAO2B and MMS19. The cofactor is [4Fe-4S] cluster. In terms of processing, phosphorylated. Phosphorylation is necessary for interaction with BRCA1, and is cell-cycle regulated.

It is found in the nucleus. The protein localises to the cytoplasm. The catalysed reaction is Couples ATP hydrolysis with the unwinding of duplex DNA at the replication fork by translocating in the 5'-3' direction. This creates two antiparallel DNA single strands (ssDNA). The leading ssDNA polymer is the template for DNA polymerase III holoenzyme which synthesizes a continuous strand.. The enzyme catalyses ATP + H2O = ADP + phosphate + H(+). Functionally, DNA-dependent helicase and 5' to 3' DNA helicase required for the maintenance of chromosomal stability. Acts late in the Fanconi anemia pathway, after FANCD2 ubiquitination. Involved in the repair of DNA double-strand breaks by homologous recombination in a manner that depends on its association with BRCA1. Involved in the repair of abasic sites at replication forks by promoting the degradation of DNA-protein cross-links: acts by catalyzing unfolding of HMCES DNA-protein cross-link via its helicase activity, exposing the underlying DNA and enabling cleavage of the DNA-protein adduct by the SPRTN metalloprotease. Can unwind RNA:DNA hybrids and G-quadruplex DNA. This is Fanconi anemia group J protein homolog from Mus musculus (Mouse).